A 212-amino-acid chain; its full sequence is Leucyl/phenylalanyl-tRNA--protein transferase (212 aa).

It belongs to the L/F-transferase family.

It is found in the cytoplasm. It carries out the reaction N-terminal L-lysyl-[protein] + L-leucyl-tRNA(Leu) = N-terminal L-leucyl-L-lysyl-[protein] + tRNA(Leu) + H(+). It catalyses the reaction N-terminal L-arginyl-[protein] + L-leucyl-tRNA(Leu) = N-terminal L-leucyl-L-arginyl-[protein] + tRNA(Leu) + H(+). The enzyme catalyses L-phenylalanyl-tRNA(Phe) + an N-terminal L-alpha-aminoacyl-[protein] = an N-terminal L-phenylalanyl-L-alpha-aminoacyl-[protein] + tRNA(Phe). In terms of biological role, functions in the N-end rule pathway of protein degradation where it conjugates Leu, Phe and, less efficiently, Met from aminoacyl-tRNAs to the N-termini of proteins containing an N-terminal arginine or lysine. This Jannaschia sp. (strain CCS1) protein is Leucyl/phenylalanyl-tRNA--protein transferase.